A 318-amino-acid polypeptide reads, in one-letter code: Protein LplB (318 aa).

Transmembrane regions (helical) follow at residues 35-55, 94-114, 130-150, 182-202, 236-256, and 289-309; these read LIPG…GVLI, LMLA…LALL, FIYV…FVFF, IVMQ…LAAL, IIVL…EQVY, and AVGL…NYIA. One can recognise an ABC transmembrane type-1 domain in the interval 90 to 305; sequence LRNTLMLASL…VVGIILIFGA (216 aa).

Belongs to the binding-protein-dependent transport system permease family. MalFG subfamily.

The protein resides in the cell membrane. This Bacillus subtilis (strain 168) protein is Protein LplB (lplB).